Here is a 456-residue protein sequence, read N- to C-terminus: MKLKAIILAAGTGTRMKSKMPKVLHKVCGQTMLGHVIDVSKDSKAEECIVVVGHGAEEVQKTLPEGVKTVLQAEQLGTGHAVMVAEEHIETQGTVLVLYGDGPLITEETLNALMTYHQEGKYSATVLTAELENPTGYGRIIRDDDDRLKTIVEEKDTTVGEKEVREINSGIYCFDSKVLKETLPKIQNNNSQKEYYLTDALTIIKQEGLKVGVYQIENYEDIMAVNSREQLAEVEEVMQRRIVKKHMEAGVTFIDPQSTYIEKTVKVGMDTILHPGVILKGATEIGEDCIIGHNSRIENSILKNGIEVQSSTIIESTIDDHATIGPYAYLRPQSHIGKHVKVGDFVEVKNATIDDHSKAAHLAYIGDAEIGKHVNIGCGVIFVNYDGIKKHKTIIKDHAFVGSNSNLVAPITIQESAFVASGSTITREVPAGALAVGRSRQENKEGWVARKGVGKK.

Positions M1–R228 are pyrophosphorylase. UDP-N-acetyl-alpha-D-glucosamine contacts are provided by residues L8–G11, K22, Q72, G77–T78, Y99–D101, G138, E153, N168, and N226. D101 contacts Mg(2+). A Mg(2+)-binding site is contributed by N226. The segment at E229–A249 is linker. The tract at residues G250–K456 is N-acetyltransferase. Residues R331 and K349 each coordinate UDP-N-acetyl-alpha-D-glucosamine. The active-site Proton acceptor is the H361. Y364 and N375 together coordinate UDP-N-acetyl-alpha-D-glucosamine. Residues N384–Y385, S403, S421, and R438 each bind acetyl-CoA.

This sequence in the N-terminal section; belongs to the N-acetylglucosamine-1-phosphate uridyltransferase family. In the C-terminal section; belongs to the transferase hexapeptide repeat family. In terms of assembly, homotrimer. Mg(2+) is required as a cofactor.

The protein localises to the cytoplasm. The catalysed reaction is alpha-D-glucosamine 1-phosphate + acetyl-CoA = N-acetyl-alpha-D-glucosamine 1-phosphate + CoA + H(+). It carries out the reaction N-acetyl-alpha-D-glucosamine 1-phosphate + UTP + H(+) = UDP-N-acetyl-alpha-D-glucosamine + diphosphate. Its pathway is nucleotide-sugar biosynthesis; UDP-N-acetyl-alpha-D-glucosamine biosynthesis; N-acetyl-alpha-D-glucosamine 1-phosphate from alpha-D-glucosamine 6-phosphate (route II): step 2/2. It participates in nucleotide-sugar biosynthesis; UDP-N-acetyl-alpha-D-glucosamine biosynthesis; UDP-N-acetyl-alpha-D-glucosamine from N-acetyl-alpha-D-glucosamine 1-phosphate: step 1/1. The protein operates within bacterial outer membrane biogenesis; LPS lipid A biosynthesis. Catalyzes the last two sequential reactions in the de novo biosynthetic pathway for UDP-N-acetylglucosamine (UDP-GlcNAc). The C-terminal domain catalyzes the transfer of acetyl group from acetyl coenzyme A to glucosamine-1-phosphate (GlcN-1-P) to produce N-acetylglucosamine-1-phosphate (GlcNAc-1-P), which is converted into UDP-GlcNAc by the transfer of uridine 5-monophosphate (from uridine 5-triphosphate), a reaction catalyzed by the N-terminal domain. The chain is Bifunctional protein GlmU from Alkaliphilus metalliredigens (strain QYMF).